We begin with the raw amino-acid sequence, 270 residues long: Putative methylsterol monooxygenase DDB_G0269788 (270 aa).

A run of 3 helical transmembrane segments spans residues 31-51 (FIAH…CDFM), 82-102 (IFVQ…IGLS), and 110-130 (IPYL…YFYW). The 132-residue stretch at 118–249 (ACCFLIEDFY…FTYLDKIFGT (132 aa)) folds into the Fatty acid hydroxylase domain. The Histidine box-1 motif lies at 132-136 (HRALH). The Histidine box-2 signature appears at 145–149 (HKVHH). Residues 224–230 (FHDFHHE) carry the Histidine box-3 motif.

This sequence belongs to the sterol desaturase family. It depends on Fe cation as a cofactor.

It is found in the endoplasmic reticulum membrane. The enzyme catalyses 4,4-dimethyl-5alpha-cholest-7-en-3beta-ol + 6 Fe(II)-[cytochrome b5] + 3 O2 + 5 H(+) = 4alpha-carboxy-4beta-methyl-5alpha-cholest-7-ene-3beta-ol + 6 Fe(III)-[cytochrome b5] + 4 H2O. Its pathway is steroid biosynthesis; zymosterol biosynthesis; zymosterol from lanosterol: step 3/6. The protein is Putative methylsterol monooxygenase DDB_G0269788 of Dictyostelium discoideum (Social amoeba).